Here is a 72-residue protein sequence, read N- to C-terminus: Cell division protein ZapB (72 aa).

Residues 1–71 adopt a coiled-coil conformation; sequence MSLEILDQLE…LRSLLGRIDN (71 aa). A disordered region spans residues 36 to 56; it reads LSRQTNEQLRSENEHLKTEHH. Residues 44 to 56 show a composition bias toward basic and acidic residues; sequence LRSENEHLKTEHH.

The protein belongs to the ZapB family. As to quaternary structure, homodimer. The ends of the coiled-coil dimer bind to each other, forming polymers. Interacts with FtsZ.

It is found in the cytoplasm. Non-essential, abundant cell division factor that is required for proper Z-ring formation. It is recruited early to the divisome by direct interaction with FtsZ, stimulating Z-ring assembly and thereby promoting cell division earlier in the cell cycle. Its recruitment to the Z-ring requires functional FtsA or ZipA. In Histophilus somni (strain 129Pt) (Haemophilus somnus), this protein is Cell division protein ZapB.